Consider the following 565-residue polypeptide: NAD-dependent malic enzyme (565 aa).

The Proton donor role is filled by tyrosine 104. Arginine 157 lines the NAD(+) pocket. The active-site Proton acceptor is the lysine 175. A divalent metal cation is bound by residues glutamate 246, aspartate 247, and aspartate 270. 2 residues coordinate NAD(+): aspartate 270 and asparagine 418.

The protein belongs to the malic enzymes family. In terms of assembly, homotetramer. It depends on Mg(2+) as a cofactor. Requires Mn(2+) as cofactor.

It catalyses the reaction (S)-malate + NAD(+) = pyruvate + CO2 + NADH. The catalysed reaction is oxaloacetate + H(+) = pyruvate + CO2. The protein is NAD-dependent malic enzyme of Yersinia pseudotuberculosis serotype O:1b (strain IP 31758).